Reading from the N-terminus, the 190-residue chain is dTTP/UTP pyrophosphatase (190 aa).

Residue Asp67 is the Proton acceptor of the active site.

Belongs to the Maf family. YhdE subfamily. A divalent metal cation is required as a cofactor.

The protein localises to the cytoplasm. It carries out the reaction dTTP + H2O = dTMP + diphosphate + H(+). It catalyses the reaction UTP + H2O = UMP + diphosphate + H(+). Its function is as follows. Nucleoside triphosphate pyrophosphatase that hydrolyzes dTTP and UTP. May have a dual role in cell division arrest and in preventing the incorporation of modified nucleotides into cellular nucleic acids. In Aquifex aeolicus (strain VF5), this protein is dTTP/UTP pyrophosphatase.